The sequence spans 220 residues: MDSRREVEESSTAPILESKRTRSNGKGKSIDGDHSPPHAATVVTTKATPLQKGGMKKGIAILDFILRLGAIGAALGAAVIMGTNEQILPFFTQFLQFHAQWDDFPMFKFFVVANGAAAGFLILSLPFSIVCIVRPLAAGPRFLLVIVDLVLMALVVAAASSAAAVVYLAHNGSQDANWNAICQQFTDFCQGSSLAVVASFVASVFLACLVVVSSVALKRT.

The interval 1 to 39 (MDSRREVEESSTAPILESKRTRSNGKGKSIDGDHSPPHA) is disordered. Over 1–60 (MDSRREVEESSTAPILESKRTRSNGKGKSIDGDHSPPHAATVVTTKATPLQKGGMKKGIA) the chain is Cytoplasmic. Residues 61–81 (ILDFILRLGAIGAALGAAVIM) traverse the membrane as a helical segment. Topologically, residues 82-108 (GTNEQILPFFTQFLQFHAQWDDFPMFK) are extracellular. A helical membrane pass occupies residues 109–129 (FFVVANGAAAGFLILSLPFSI). Residues 130-141 (VCIVRPLAAGPR) lie on the Cytoplasmic side of the membrane. The chain crosses the membrane as a helical span at residues 142–162 (FLLVIVDLVLMALVVAAASSA). At 163–194 (AAVVYLAHNGSQDANWNAICQQFTDFCQGSSL) the chain is on the extracellular side. Asn-171 carries an N-linked (GlcNAc...) asparagine glycan. The chain crosses the membrane as a helical span at residues 195–215 (AVVASFVASVFLACLVVVSSV). The Cytoplasmic segment spans residues 216–220 (ALKRT).

The protein belongs to the Casparian strip membrane proteins (CASP) family. Homodimer and heterodimers.

Its subcellular location is the cell membrane. In terms of biological role, regulates membrane-cell wall junctions and localized cell wall deposition. Required for establishment of the Casparian strip membrane domain (CSD) and the subsequent formation of Casparian strips, a cell wall modification of the root endodermis that determines an apoplastic barrier between the intraorganismal apoplasm and the extraorganismal apoplasm and prevents lateral diffusion. This Medicago truncatula (Barrel medic) protein is Casparian strip membrane protein 4.